We begin with the raw amino-acid sequence, 422 residues long: Steroid hormone receptor ERR1 (422 aa).

Residues 1–67 (MSSQVVGIEP…GAGPGEQGGG (67 aa)) form a disordered region. A phosphoserine mark is found at Ser19 and Ser22. Residues 58-67 (GAGPGEQGGG) are compositionally biased toward gly residues. The segment at residues 76 to 151 (KRLCLVCGDV…VGMLKEGVRL (76 aa)) is a DNA-binding region (nuclear receptor). 2 NR C4-type zinc fingers span residues 79–99 (CLVCGDVASGYHYGVASCEAC) and 115–134 (CPASNECEITKRRRKACQAC). 4 positions are modified to N6-acetyllysine; by PCAF/KAT2B: Lys129, Lys138, Lys160, and Lys162. Residues Lys189 and Lys402 each participate in a glycyl lysine isopeptide (Lys-Gly) (interchain with G-Cter in SUMO2) cross-link. An NR LBD domain is found at 192 to 420 (PVNALVSHLL…KLFLEMLEAM (229 aa)).

This sequence belongs to the nuclear hormone receptor family. NR3 subfamily. Binds DNA as a monomer or a homodimer. Interacts (via the AF2 domain) with coactivator PPARGC1A (via the L3 motif); the interaction greatly enhances transcriptional activity of genes involved in energy metabolism. Interacts with PIAS4; the interaction enhances sumoylation. Interacts with MAPK15; promotes re-localization of ESRRA to the cytoplasm through a XPO1-dependent mechanism then inhibits ESRRA transcriptional activity. Phosphorylation on Ser-19 enhances sumoylation on Lys-14 increasing repression of transcriptional activity. In terms of processing, sumoylated with SUMO2. Main site is Lys-14 which is enhanced by phosphorylation on Ser-19, cofactor activation, and by interaction with PIAS4. Sumoylation enhances repression of transcriptional activity, but has no effect on subcellular location nor on DNA binding. Post-translationally, reversibly acetylated. Acetylation by PCAF/KAT2 at Lys-129, Lys-138, Lys-160 and Lys-162 and PCAF/KAT2 decreases transcriptional activity probably by inhibiting DNA-binding activity; deacetylation involves SIRT1 and HDAC8 and increases DNA-binding.

It localises to the nucleus. Its subcellular location is the cytoplasm. Its function is as follows. Binds to an ERR-alpha response element (ERRE) containing a single consensus half-site, 5'-TNAAGGTCA-3'. Can bind to the medium-chain acyl coenzyme A dehydrogenase (MCAD) response element NRRE-1 and may act as an important regulator of MCAD promoter. May function as a modulator of the estrogen signaling pathway in the uterus. Induces the expression of PERM1 in the skeletal muscle. This Canis lupus familiaris (Dog) protein is Steroid hormone receptor ERR1 (ESRRA).